The following is a 619-amino-acid chain: ATP-dependent zinc metalloprotease FtsH (619 aa).

Residues 1-11 (MSNTDPQPPQK) lie on the Cytoplasmic side of the membrane. The helical transmembrane segment at 12 to 32 (LPLNWVVWTLAVALMLYYLPA) threads the bilayer. The Periplasmic segment spans residues 33–120 (MRDRPEPAIK…EVKEGHDASS (88 aa)). Residues 121 to 141 (SKVILLSYLPWIMFMIILFWL) traverse the membrane as a helical segment. The Cytoplasmic segment spans residues 142-619 (SRRTFRNFSG…IDECLQTGAS (478 aa)). 216–223 (GPPGTGKT) is a binding site for ATP. A Zn(2+)-binding site is contributed by histidine 437. Glutamate 438 is a catalytic residue. The Zn(2+) site is built by histidine 441 and aspartate 513.

This sequence in the central section; belongs to the AAA ATPase family. In the C-terminal section; belongs to the peptidase M41 family. As to quaternary structure, homohexamer. Requires Zn(2+) as cofactor.

The protein resides in the cell inner membrane. Its function is as follows. Acts as a processive, ATP-dependent zinc metallopeptidase for both cytoplasmic and membrane proteins. Plays a role in the quality control of integral membrane proteins. This Hahella chejuensis (strain KCTC 2396) protein is ATP-dependent zinc metalloprotease FtsH.